A 158-amino-acid chain; its full sequence is Osmosensory protein A (158 aa).

Thr-2 is subject to Phosphothreonine; by PknD. In terms of domain architecture, STAS spans 28–139 (AQIRAYLHHL…RSVHKALHDL (112 aa)).

It belongs to the anti-sigma-factor antagonist family. Interacts with Rv2638. Phosphorylation abolishes binding to Rv2638. In terms of processing, phosphorylated on Thr-2 by the serine/threonine-protein kinase PknD. Also phosphorylated to a lesser extent by PknB and PknE. Dephosphorylated by PstP.

Regulated by PknD under osmotic stress. Functionally, part of a signaling pathway that enables adaptation to osmotic stress through cell wall remodeling and virulence factor production. Unphosphorylated OprA forms a complex with the anti-anti-sigma-factor paralog Rv2638 that dissociates on OprA phosphorylation by PknD. Phosphorylation of OprA may stimulate the release of SigF from an inhibitory complex and enable the transcription of osmotically regulated genes, such as oprA and the ESX-1-associated virulence factor espA. The chain is Osmosensory protein A from Mycobacterium tuberculosis (strain ATCC 25618 / H37Rv).